A 510-amino-acid chain; its full sequence is NAD(P)H-quinone oxidoreductase subunit 2, chloroplastic (510 aa).

A run of 13 helical transmembrane segments spans residues 24 to 44 (LLLF…GLIL), 59 to 79 (WFYF…LFRW), 99 to 119 (IFQF…VEYI), 124 to 144 (MAIT…MFLC), 149 to 169 (LITI…LSGY), 183 to 203 (YLLM…WLYG), 229 to 249 (ISIA…PAPF), 295 to 315 (WHLL…LIAI), 323 to 343 (MLAY…IVGD), 354 to 374 (YMLF…SFGL), 395 to 415 (ALSL…AGFF), 418 to 438 (LYLF…MGLL), and 484 to 504 (MTVC…ILAI).

Belongs to the complex I subunit 2 family. In terms of assembly, NDH is composed of at least 16 different subunits, 5 of which are encoded in the nucleus.

The protein resides in the plastid. It is found in the chloroplast thylakoid membrane. The enzyme catalyses a plastoquinone + NADH + (n+1) H(+)(in) = a plastoquinol + NAD(+) + n H(+)(out). It catalyses the reaction a plastoquinone + NADPH + (n+1) H(+)(in) = a plastoquinol + NADP(+) + n H(+)(out). Functionally, NDH shuttles electrons from NAD(P)H:plastoquinone, via FMN and iron-sulfur (Fe-S) centers, to quinones in the photosynthetic chain and possibly in a chloroplast respiratory chain. The immediate electron acceptor for the enzyme in this species is believed to be plastoquinone. Couples the redox reaction to proton translocation, and thus conserves the redox energy in a proton gradient. In Sisyrinchium montanum (Strict blue-eyed grass), this protein is NAD(P)H-quinone oxidoreductase subunit 2, chloroplastic.